The primary structure comprises 308 residues: Phosphoribosylaminoimidazole-succinocarboxamide synthase (308 aa).

The protein belongs to the SAICAR synthetase family.

The catalysed reaction is 5-amino-1-(5-phospho-D-ribosyl)imidazole-4-carboxylate + L-aspartate + ATP = (2S)-2-[5-amino-1-(5-phospho-beta-D-ribosyl)imidazole-4-carboxamido]succinate + ADP + phosphate + 2 H(+). It participates in purine metabolism; IMP biosynthesis via de novo pathway; 5-amino-1-(5-phospho-D-ribosyl)imidazole-4-carboxamide from 5-amino-1-(5-phospho-D-ribosyl)imidazole-4-carboxylate: step 1/2. This chain is Phosphoribosylaminoimidazole-succinocarboxamide synthase, found in Stenotrophomonas maltophilia (strain R551-3).